The primary structure comprises 101 residues: Enhancer of yellow 2 transcription factor (101 aa).

This sequence belongs to the ENY2 family. In terms of assembly, component of the nuclear pore complex (NPC)-associated AMEX complex (anchoring and mRNA export complex), composed of at least e(y)2 and xmas-2. Component of the SAGA transcription coactivator-HAT complexes, at least composed of Ada2b, e(y)2, Pcaf/Gcn5, Taf10 and Nipped-A/Trrap. Within the SAGA complex, e(y)2, Sgf11, and not/nonstop form an additional subcomplex of SAGA called the DUB module (deubiquitination module). Component of the THO complex, composed of at least e(y)2, HPR1, THO2, THOC5, THOC6 and THOC7. Interacts with e(y)1. Interacts with su(Hw) (via zinc fingers). Interacts with xmas-2; required for localization to the nuclear periphery. Interacts with the nuclear pore complex (NPC).

Its subcellular location is the nucleus. The protein resides in the nucleoplasm. It is found in the cytoplasm. Involved in mRNA export coupled transcription activation by association with both the AMEX and the SAGA complexes. The SAGA complex is a multiprotein complex that activates transcription by remodeling chromatin and mediating histone acetylation and deubiquitination. Within the SAGA complex, participates in a subcomplex that specifically deubiquitinates histone H2B. The SAGA complex is recruited to specific gene promoters by activators, where it is required for transcription. Required for nuclear receptor-mediated transactivation. Involved in transcription elongation by recruiting the THO complex onto nascent mRNA. The AMEX complex functions in docking export-competent ribonucleoprotein particles (mRNPs) to the nuclear entrance of the nuclear pore complex (nuclear basket). AMEX participates in mRNA export and accurate chromatin positioning in the nucleus by tethering genes to the nuclear periphery. The polypeptide is Enhancer of yellow 2 transcription factor (Drosophila erecta (Fruit fly)).